The sequence spans 193 residues: Large ribosomal subunit protein bL21 (193 aa).

The protein belongs to the bacterial ribosomal protein bL21 family. In terms of assembly, part of the 50S ribosomal subunit. Contacts protein L20.

Functionally, this protein binds to 23S rRNA in the presence of protein L20. The chain is Large ribosomal subunit protein bL21 from Ruegeria pomeroyi (strain ATCC 700808 / DSM 15171 / DSS-3) (Silicibacter pomeroyi).